A 423-amino-acid polypeptide reads, in one-letter code: Aspartate aminotransferase, mitochondrial (423 aa).

The transit peptide at 1-22 (MALLQSRLLLSAPRRAAATARA) directs the protein to the mitochondrion. Residues Gly-58, Trp-155, and Asn-208 each contribute to the substrate site. Lys-272 is modified (N6-(pyridoxal phosphate)lysine). Position 400 (Arg-400) interacts with substrate.

This sequence belongs to the class-I pyridoxal-phosphate-dependent aminotransferase family. Homodimer. Pyridoxal 5'-phosphate is required as a cofactor. In terms of tissue distribution, detected in heart (at protein level).

It is found in the mitochondrion matrix. It catalyses the reaction L-aspartate + 2-oxoglutarate = oxaloacetate + L-glutamate. It carries out the reaction L-kynurenine + 2-oxoglutarate = kynurenate + L-glutamate + H2O. Its function is as follows. Catalyzes the irreversible transamination of the L-tryptophan metabolite L-kynurenine to form kynurenic acid (KA). As a member of the malate-aspartate shuttle, it has a key role in the intracellular NAD(H) redox balance. Is important for metabolite exchange between mitochondria and cytosol, and for amino acid metabolism. This chain is Aspartate aminotransferase, mitochondrial (GOT2), found in Gallus gallus (Chicken).